Here is a 510-residue protein sequence, read N- to C-terminus: Zinc finger protein 692 (510 aa).

2 disordered regions span residues 1-20 (MAAS…RQLD) and 121-306 (WGPS…EDTA). A Phosphoserine modification is found at Ser161. The segment covering 163 to 172 (CDERAQEARM) has biased composition (basic and acidic residues). Acidic residues predominate over residues 188 to 201 (EDGEEEEEDEEEML). Ser225 carries the phosphoserine modification. A compositionally biased stretch (low complexity) spans 237–265 (APAPAAVPAPLASPSSSASSLGSGAPGPV). The segment covering 278-297 (QADQQTEPLASPGSQAQSAL) has biased composition (polar residues). 5 consecutive C2H2-type zinc fingers follow at residues 322 to 347 (LPCD…KYQH), 353 to 377 (FSCP…VKLH), 383 to 405 (YICE…RRIH), 411 to 433 (LQCE…RRKH), and 442 to 465 (FPCE…SKSH). Ser464 carries the post-translational modification Phosphoserine.

The protein belongs to the krueppel C2H2-type zinc-finger protein family. Post-translationally, phosphorylation at Ser-464 results in loss of DNA-binding activity.

It localises to the nucleus. Functionally, may act as an transcriptional repressor for PCK1 gene expression, in turn may participate in the hepatic gluconeogenesis regulation through the activated AMPK signaling pathway. The sequence is that of Zinc finger protein 692 from Bos taurus (Bovine).